The following is a 309-amino-acid chain: Taste receptor type 2 member 46 (309 aa).

A topological domain (extracellular) is located at residue Met-1. Residues 2–22 traverse the membrane as a helical segment; sequence ITFLPIIFSILIVVTFVIGNF. The Cytoplasmic portion of the chain corresponds to 23-46; that stretch reads ANGFIALVNSIEWFKRQKISFADQ. Residues 47 to 67 traverse the membrane as a helical segment; it reads ILTALAVSRVGLLWVLVLNWY. The Extracellular segment spans residues 68-86; the sequence is ATELNPAFNSIEVRITAYN. Residues 87–107 traverse the membrane as a helical segment; the sequence is VWAVINHFSNWLATSLSIFYL. Over 108–126 the chain is Cytoplasmic; that stretch reads LKIANFSNLIFLHLKRRVK. A helical membrane pass occupies residues 127-147; sequence SVVLVILLGPLLFLVCHLFVI. The Extracellular segment spans residues 148–178; the sequence is NMNQIIWTKEYEGNMTWKIKLRSAMYLSNTT. Asn-161 and Asn-176 each carry an N-linked (GlcNAc...) asparagine glycan. Residues 179–199 form a helical membrane-spanning segment; sequence VTILANLVPFTLTLISFLLLI. Residues 200-229 lie on the Cytoplasmic side of the membrane; the sequence is CSLCKHLKKMQLHGKGSQDPSMKVHIKALQ. The chain crosses the membrane as a helical span at residues 230–250; the sequence is TVTSFLLLCAIYFLSIIMSVW. Residues 251–259 are Extracellular-facing; the sequence is SFESLENKP. A helical transmembrane segment spans residues 260–280; it reads VFMFCEAIAFSYPSTHPFILI. The Cytoplasmic portion of the chain corresponds to 281 to 309; it reads WGNKKLKQTFLSVLWHVRYWVKGEKPSSS.

The protein belongs to the G-protein coupled receptor T2R family. Expressed in subsets of taste receptor cells of the tongue and exclusively in gustducin-positive cells. Expressed on ciliated airway epithelium.

It is found in the membrane. Its subcellular location is the cell projection. The protein resides in the cilium membrane. Receptor that may play a role in the perception of bitterness and is gustducin-linked. May play a role in sensing the chemical composition of the gastrointestinal content. The activity of this receptor may stimulate alpha gustducin, mediate PLC-beta-2 activation and lead to the gating of TRPM5. In airway epithelial cells, binding of bitter compounds increases the intracellular calcium ion concentration and stimulates ciliary beat frequency. This chain is Taste receptor type 2 member 46 (TAS2R46), found in Homo sapiens (Human).